The sequence spans 242 residues: 2-C-methyl-D-erythritol 4-phosphate cytidylyltransferase (242 aa).

This sequence belongs to the IspD/TarI cytidylyltransferase family. IspD subfamily.

The catalysed reaction is 2-C-methyl-D-erythritol 4-phosphate + CTP + H(+) = 4-CDP-2-C-methyl-D-erythritol + diphosphate. Its pathway is isoprenoid biosynthesis; isopentenyl diphosphate biosynthesis via DXP pathway; isopentenyl diphosphate from 1-deoxy-D-xylulose 5-phosphate: step 2/6. Its function is as follows. Catalyzes the formation of 4-diphosphocytidyl-2-C-methyl-D-erythritol from CTP and 2-C-methyl-D-erythritol 4-phosphate (MEP). The chain is 2-C-methyl-D-erythritol 4-phosphate cytidylyltransferase from Shewanella loihica (strain ATCC BAA-1088 / PV-4).